The following is a 401-amino-acid chain: 26S proteasome regulatory subunit 6A (401 aa).

Position 189 to 196 (G189 to T196) interacts with ATP.

It belongs to the AAA ATPase family. As to quaternary structure, the 26S proteasome consists of a 20S proteasome core and two 19S regulatory subunits. The 20S proteasome core is composed of 28 subunits that are arranged in four stacked rings, resulting in a barrel-shaped structure. The two end rings are each formed by seven alpha subunits, and the two central rings are each formed by seven beta subunits. The catalytic chamber with the active sites is on the inside of the barrel.

The protein localises to the cytoplasm. Its subcellular location is the nucleus. Functionally, acts as a regulatory subunit of the 26S proteasome which degrades poly-ubiquitinated proteins in the cytoplasm and in the nucleus. It is essential for the regulated turnover of proteins and for the removal of misfolded proteins. The proteasome is a multicatalytic proteinase complex that is characterized by its ability to cleave peptides with Arg, Phe, Tyr, Leu, and Glu adjacent to the leaving group at neutral or slightly basic pH. The sequence is that of 26S proteasome regulatory subunit 6A (RPT5) from Encephalitozoon cuniculi (strain GB-M1) (Microsporidian parasite).